Consider the following 197-residue polypeptide: Probable GTP-binding protein EngB (197 aa).

Residues 22–195 (ALPELALVGR…WQWIEERTGV (174 aa)) enclose the EngB-type G domain. GTP-binding positions include 30–37 (GRSNVGKS), 57–61 (GKTQT), 75–78 (DVPG), 142–145 (TKVD), and 174–176 (FSA). The Mg(2+) site is built by S37 and T59.

Belongs to the TRAFAC class TrmE-Era-EngA-EngB-Septin-like GTPase superfamily. EngB GTPase family. Requires Mg(2+) as cofactor.

In terms of biological role, necessary for normal cell division and for the maintenance of normal septation. This is Probable GTP-binding protein EngB from Limosilactobacillus fermentum (strain NBRC 3956 / LMG 18251) (Lactobacillus fermentum).